The primary structure comprises 98 residues: NADH-ubiquinone oxidoreductase chain 4L (98 aa).

3 helical membrane passes run Met-1–Met-21, Ser-29–Leu-49, and Ile-61–Val-81.

It belongs to the complex I subunit 4L family. As to quaternary structure, core subunit of respiratory chain NADH dehydrogenase (Complex I) which is composed of 45 different subunits.

Its subcellular location is the mitochondrion inner membrane. It carries out the reaction a ubiquinone + NADH + 5 H(+)(in) = a ubiquinol + NAD(+) + 4 H(+)(out). In terms of biological role, core subunit of the mitochondrial membrane respiratory chain NADH dehydrogenase (Complex I) which catalyzes electron transfer from NADH through the respiratory chain, using ubiquinone as an electron acceptor. Part of the enzyme membrane arm which is embedded in the lipid bilayer and involved in proton translocation. In Stenoderma rufum (Red fruit bat), this protein is NADH-ubiquinone oxidoreductase chain 4L (MT-ND4L).